The sequence spans 291 residues: Glycine--tRNA ligase alpha subunit (291 aa).

This sequence belongs to the class-II aminoacyl-tRNA synthetase family. Tetramer of two alpha and two beta subunits.

It localises to the cytoplasm. It carries out the reaction tRNA(Gly) + glycine + ATP = glycyl-tRNA(Gly) + AMP + diphosphate. This Coprothermobacter proteolyticus (strain ATCC 35245 / DSM 5265 / OCM 4 / BT) protein is Glycine--tRNA ligase alpha subunit.